A 96-amino-acid chain; its full sequence is MSSGGLLLLLGFLTLWAELTPISGQNRPMFCHLPADSGRCKAHIPRFYYNPASNQCQGFTYGGCGGNANNFETRDQCRHTCGASGNVGPRPRIASN.

Residues 1 to 24 (MSSGGLLLLLGFLTLWAELTPISG) form the signal peptide. Residue Gln25 is modified to Pyrrolidone carboxylic acid. Residues 31–81 (CHLPADSGRCKAHIPRFYYNPASNQCQGFTYGGCGGNANNFETRDQCRHTC) form the BPTI/Kunitz inhibitor domain. 3 disulfide bridges follow: Cys31–Cys81, Cys40–Cys64, and Cys56–Cys77. Residues 85–96 (GNVGPRPRIASN) constitute a propeptide that is removed on maturation.

This sequence belongs to the venom Kunitz-type family. Expressed by the venom gland.

The protein resides in the secreted. Its function is as follows. Serine protease inhibitor. This Daboia siamensis (Eastern Russel's viper) protein is Kunitz-type serine protease inhibitor C6.